The primary structure comprises 492 residues: N-succinylglutamate 5-semialdehyde dehydrogenase (492 aa).

NAD(+) is bound at residue 220–225 (GSANTG). Active-site residues include E243 and C277.

It belongs to the aldehyde dehydrogenase family. AstD subfamily.

It carries out the reaction N-succinyl-L-glutamate 5-semialdehyde + NAD(+) + H2O = N-succinyl-L-glutamate + NADH + 2 H(+). It functions in the pathway amino-acid degradation; L-arginine degradation via AST pathway; L-glutamate and succinate from L-arginine: step 4/5. Catalyzes the NAD-dependent reduction of succinylglutamate semialdehyde into succinylglutamate. The chain is N-succinylglutamate 5-semialdehyde dehydrogenase from Escherichia coli O9:H4 (strain HS).